Here is a 299-residue protein sequence, read N- to C-terminus: MSAKPSVGFVNEASRQILAGGSAGLVEICLMHPLDVVKTRFQIQRCTTDPNSYKSLGDSFRMIFRTEGLFGFYKGILPPILAETPKRAVKFFTFEQYKKLLGYVSLSPALTFAVAGLGSGLTEAIVVNPFEVVKVGLQANRNRFTEQPSTMSYARHIIKKEGLGLGGLNKGFTATLGRHGVFNMVYFGFYFNVKNIIPVNKDPTLEFLRKFGIGLLSGTIASVINIPFDVAKSRIQGPQPVPGEIKYKTCFKTMATVYQEEGILALYKGLLPKIMRLGPGGAVMLLVYEYTYSWLQENW.

3 Solcar repeats span residues 11–100, 107–196, and 205–294; these read NEAS…YKKL, SPAL…VKNI, and LEFL…TYSW. Transmembrane regions (helical) follow at residues 17–37, 62–82, 100–120, 179–199, 211–231, and 274–290; these read ILAGGSAGLVEICLMHPLDVV, MIFRTEGLFGFYKGILPPILA, LLGYVSLSPALTFAVAGLGSG, HGVFNMVYFGFYFNVKNIIPV, FGIGLLSGTIASVINIPFDVA, and IMRLGPGGAVMLLVYEY.

The protein belongs to the mitochondrial carrier (TC 2.A.29) family.

It localises to the mitochondrion inner membrane. The catalysed reaction is 2-oxoadipate(in) + 2-oxoglutarate(out) = 2-oxoadipate(out) + 2-oxoglutarate(in). It carries out the reaction hexanedioate(in) + 2-oxoglutarate(out) = hexanedioate(out) + 2-oxoglutarate(in). It catalyses the reaction L-2-aminoadipate(in) + 2-oxoglutarate(out) = L-2-aminoadipate(out) + 2-oxoglutarate(in). The enzyme catalyses glutarate(in) + 2-oxoglutarate(out) = glutarate(out) + 2-oxoglutarate(in). The catalysed reaction is 2-oxoheptanedioate(in) + 2-oxoglutarate(out) = 2-oxoheptanedioate(out) + 2-oxoglutarate(in). It carries out the reaction heptanedioate(in) + 2-oxoglutarate(out) = heptanedioate(out) + 2-oxoglutarate(in). It catalyses the reaction citrate(in) + 2-oxoglutarate(out) = citrate(out) + 2-oxoglutarate(in). Functionally, transports dicarboxylates across the inner membranes of mitochondria by a counter-exchange mechanism. Can transport 2-oxoadipate (2-oxohexanedioate), 2-oxoglutarate, adipate (hexanedioate), glutarate, and to a lesser extent, pimelate (heptanedioate), 2-oxopimelate (2-oxoheptanedioate), 2-aminoadipate (2-aminohexanedioate), oxaloacetate, and citrate. Plays a central role in catabolism of lysine, hydroxylysine, and tryptophan, by transporting common metabolite intermediates (such as 2-oxoadipate) into the mitochondria, where it is converted into acetyl-CoA and can enter the citric acid (TCA) cycle. The polypeptide is Mitochondrial 2-oxodicarboxylate carrier (SLC25A21) (Bos taurus (Bovine)).